Reading from the N-terminus, the 325-residue chain is Elongation factor P--(R)-beta-lysine ligase (325 aa).

76–78 (SPE) lines the substrate pocket. ATP contacts are provided by residues 100–102 (RNE) and N109. Y118 provides a ligand contact to substrate. 244-245 (EL) is an ATP binding site. A substrate-binding site is contributed by E251. Residue G300 participates in ATP binding.

This sequence belongs to the class-II aminoacyl-tRNA synthetase family. EpmA subfamily. As to quaternary structure, homodimer.

The catalysed reaction is D-beta-lysine + L-lysyl-[protein] + ATP = N(6)-((3R)-3,6-diaminohexanoyl)-L-lysyl-[protein] + AMP + diphosphate + H(+). With EpmB is involved in the beta-lysylation step of the post-translational modification of translation elongation factor P (EF-P) on 'Lys-34'. Catalyzes the ATP-dependent activation of (R)-beta-lysine produced by EpmB, forming a lysyl-adenylate, from which the beta-lysyl moiety is then transferred to the epsilon-amino group of EF-P 'Lys-34'. The polypeptide is Elongation factor P--(R)-beta-lysine ligase (Escherichia coli O139:H28 (strain E24377A / ETEC)).